We begin with the raw amino-acid sequence, 360 residues long: CFA/I fimbrial subunit E (360 aa).

The protein localises to the fimbrium. The protein is CFA/I fimbrial subunit E (cfaE) of Escherichia coli.